A 308-amino-acid polypeptide reads, in one-letter code: MALFPDLVPELKAAMPQLRGRLLGNEPLAPLTWFRVGGPAQVLFTPADADDLGYFLAALPRDIDVTVVGVGSNLIVRDGGLPGVVIRLGGRGFGETGTDGDVVSAGSAALDKRVAEAAAAAGLGGLEFYHGIPGTIGGALRMNAGANGRETKDVLIDASAIARDGTLHRLSNAEMGFSYRHSGADPALIFTSARFRGEPMDRAAIRARMDEVQRHRETAQPVREKTGGSTFKNPPGHSAWKLIDAAGCRGLRVGGAQVSEMHCNFLINTGSATAQDIETLGDTVRARVKEHCGIELQWEIKRIGRALD.

The FAD-binding PCMH-type domain occupies Arg-35–Met-200. Residue Arg-180 is part of the active site. Over residues Glu-211–Thr-226 the composition is skewed to basic and acidic residues. The interval Glu-211–Gly-236 is disordered. The Proton donor role is filled by Ser-229. Residue Glu-299 is part of the active site.

This sequence belongs to the MurB family. FAD serves as cofactor.

It is found in the cytoplasm. It carries out the reaction UDP-N-acetyl-alpha-D-muramate + NADP(+) = UDP-N-acetyl-3-O-(1-carboxyvinyl)-alpha-D-glucosamine + NADPH + H(+). It functions in the pathway cell wall biogenesis; peptidoglycan biosynthesis. Functionally, cell wall formation. The protein is UDP-N-acetylenolpyruvoylglucosamine reductase of Rhodopseudomonas palustris (strain BisB18).